We begin with the raw amino-acid sequence, 399 residues long: MALTRRAAVMRGVENAVTGHNTKAKVQVTGKRAVLEEIGNKVARGSNVPKKTDCIKPPVKATKGPGKMTNTVVPPKPPAAVNQAVKDTTTASKVLSPVPMDVSMQEEDLCQAFSDVLLHNIEDIDADDSGNPQLCSDYVKDIYLYLRQLELQQSVRPHYLDGKTINGRMRAILVDWLVQVHSRFQLLQETLYMCVAVMDRFLQSHPVPRKRLQLVGVTALLLASKYEEMYSPDIADFVYITDNAYNSAEVREMEITILKELNFDLGRPLPLHFLRRASKAGEADAEQHTLAKYLMELTLIDYDMVHYHPSEIAAAALCLSQKVLGHDKWGTKQQYYTGYAEDSLAMTMKHMAKNVVKVNENLTKYTAVRNKYASSKLLRISTISQLNSKTIKDLAASLL.

Residues 58–78 are disordered; sequence PVKATKGPGKMTNTVVPPKPP.

It belongs to the cyclin family. Cyclin AB subfamily. As to quaternary structure, interacts with the CDK1 protein kinase to form a serine/threonine kinase holoenzyme complex also known as maturation promoting factor (MPF). The cyclin subunit imparts substrate specificity to the complex.

In terms of biological role, essential for the control of the cell cycle at the G2/M (mitosis) transition. The polypeptide is G2/mitotic-specific cyclin-B2 (CCNB2) (Gallus gallus (Chicken)).